Here is a 450-residue protein sequence, read N- to C-terminus: 23S rRNA (uracil(1939)-C(5))-methyltransferase RlmD (450 aa).

The TRAM domain occupies 15–73 (KAVPAKNLTVTVASLDPFGQGVARHEGKTVFVTGVLPGEQAEVQLTEEKRQFSHAKLKR). Residues cysteine 86, cysteine 92, cysteine 95, and cysteine 173 each coordinate [4Fe-4S] cluster. Glutamine 276, phenylalanine 305, asparagine 310, glutamate 326, asparagine 353, and aspartate 374 together coordinate S-adenosyl-L-methionine. Cysteine 400 acts as the Nucleophile in catalysis.

Belongs to the class I-like SAM-binding methyltransferase superfamily. RNA M5U methyltransferase family. RlmD subfamily.

The catalysed reaction is uridine(1939) in 23S rRNA + S-adenosyl-L-methionine = 5-methyluridine(1939) in 23S rRNA + S-adenosyl-L-homocysteine + H(+). In terms of biological role, catalyzes the formation of 5-methyl-uridine at position 1939 (m5U1939) in 23S rRNA. The chain is 23S rRNA (uracil(1939)-C(5))-methyltransferase RlmD from Pectobacterium atrosepticum (strain SCRI 1043 / ATCC BAA-672) (Erwinia carotovora subsp. atroseptica).